Reading from the N-terminus, the 389-residue chain is Odorant receptor 85c (389 aa).

At 1-33 the chain is on the cytoplasmic side; sequence MKFMKYAVFFYTSVGIEPYTIDSRSKKASLWSH. The chain crosses the membrane as a helical span at residues 34–54; it reads LLFWANVINLSVIVFGEILYL. Topologically, residues 55–66 are extracellular; that stretch reads GVAYSDGKFIDA. The chain crosses the membrane as a helical span at residues 67-87; that stretch reads VTVLSYIGFVIVGMSKMFFIW. Topologically, residues 88–130 are cytoplasmic; sequence WKKTDLSDLVKELEHIYPNGKAEEEMYRLDRYLRSCSRISITY. A helical membrane pass occupies residues 131–151; that stretch reads ALLYSVLIWTFNLFSIMQFLV. Residues 152 to 199 lie on the Extracellular side of the membrane; that stretch reads YEKLLKIRVVGQTLPYLMYFPWNWHENWTYYVLLFCQNFAGHTSASGQ. A glycan (N-linked (GlcNAc...) asparagine) is linked at Asn178. A helical transmembrane segment spans residues 200–220; sequence ISTDLLLCAVATQVVMHFDYL. Over 221–259 the chain is Cytoplasmic; the sequence is ARVVEKQVLDRDWSENSRFLAKTVQYHQRILRLMDVLND. The helical transmembrane segment at 260 to 280 threads the bilayer; the sequence is IFGIPLLLNFMVSTFVICFVG. The Extracellular segment spans residues 281–290; the sequence is FQMTVGVPPD. Residues 291–311 traverse the membrane as a helical segment; it reads IMIKLFLFLFSSLSQVYLICH. Residues 312-359 are Cytoplasmic-facing; the sequence is YGQLIADASSSLSISAYKQNWQNADIRYRRALVFFIARPQRTTYLKAT. The helical transmembrane segment at 360-380 threads the bilayer; that stretch reads IFMNITRATMTDLLQVSYKFF. Residues 381–389 are Extracellular-facing; it reads ALLRTMYIK.

It belongs to the insect chemoreceptor superfamily. Heteromeric odorant receptor channel (TC 1.A.69) family. Or49a subfamily. Interacts with Orco. Complexes exist early in the endomembrane system in olfactory sensory neurons (OSNs), coupling these complexes to the conserved ciliary trafficking pathway.

Its subcellular location is the cell membrane. Functionally, odorant receptor which mediates acceptance or avoidance behavior, depending on its substrates. The odorant receptor repertoire encodes a large collection of odor stimuli that vary widely in identity, intensity, and duration. May form a complex with Orco to form odorant-sensing units, providing sensitive and prolonged odorant signaling and calcium permeability. The sequence is that of Odorant receptor 85c (Or85c) from Drosophila melanogaster (Fruit fly).